The following is a 137-amino-acid chain: Oleosin Ara h 11.0102 (137 aa).

Position 2 is an N-acetylalanine; alternate (A2). 2 helical membrane-spanning segments follow: residues 27–47 (AVVAGGSLLILAGLVLAATVI) and 55–75 (LFVIFSPVLVPAVITVALLGL).

The protein belongs to the oleosin family. In terms of tissue distribution, expressed in seeds (at protein level).

It is found in the lipid droplet. It localises to the membrane. In terms of biological role, may have a structural role to stabilize the lipid body during desiccation of the seed by preventing coalescence of the oil. Probably interacts with both lipid and phospholipid moieties of lipid bodies. May also provide recognition signals for specific lipase anchorage in lipolysis during seedling growth. The protein is Oleosin Ara h 11.0102 of Arachis hypogaea (Peanut).